The sequence spans 152 residues: 3-dehydroquinate dehydratase (152 aa).

Y22 (proton acceptor) is an active-site residue. Substrate-binding residues include N73, H79, and D86. Catalysis depends on H99, which acts as the Proton donor. Residues 100 to 101 (LS) and R110 each bind substrate.

This sequence belongs to the type-II 3-dehydroquinase family. In terms of assembly, homododecamer.

The enzyme catalyses 3-dehydroquinate = 3-dehydroshikimate + H2O. The protein operates within metabolic intermediate biosynthesis; chorismate biosynthesis; chorismate from D-erythrose 4-phosphate and phosphoenolpyruvate: step 3/7. In terms of biological role, catalyzes a trans-dehydration via an enolate intermediate. This chain is 3-dehydroquinate dehydratase, found in Gemmatimonas aurantiaca (strain DSM 14586 / JCM 11422 / NBRC 100505 / T-27).